A 216-amino-acid chain; its full sequence is Octanoyltransferase (216 aa).

Residues 35–213 (NSNPDFIWIG…IIQEEFNFDF (179 aa)) enclose the BPL/LPL catalytic domain. Residues 77 to 84 (RGGEVTCH), 144 to 146 (SIG), and 157 to 159 (GFS) contribute to the substrate site. C175 acts as the Acyl-thioester intermediate in catalysis.

Belongs to the LipB family.

It is found in the cytoplasm. The catalysed reaction is octanoyl-[ACP] + L-lysyl-[protein] = N(6)-octanoyl-L-lysyl-[protein] + holo-[ACP] + H(+). The protein operates within protein modification; protein lipoylation via endogenous pathway; protein N(6)-(lipoyl)lysine from octanoyl-[acyl-carrier-protein]: step 1/2. In terms of biological role, catalyzes the transfer of endogenously produced octanoic acid from octanoyl-acyl-carrier-protein onto the lipoyl domains of lipoate-dependent enzymes. Lipoyl-ACP can also act as a substrate although octanoyl-ACP is likely to be the physiological substrate. This chain is Octanoyltransferase, found in Prochlorococcus marinus (strain MIT 9215).